Reading from the N-terminus, the 305-residue chain is Deoxyhypusine hydroxylase (305 aa).

HEAT-like PBS-type repeat units follow at residues 54–80 (LKHE…VLKD) and 87–113 (VRHE…YAED). Residues histidine 56, histidine 89, and glutamate 90 each contribute to the Fe cation site. The tract at residues 137–160 (EQTKDGTDENPYCSVDPAPPAQRK) is disordered. HEAT-like PBS-type repeat units follow at residues 178-204 (DRYR…GLQC), 209-235 (FRHE…ALEK), and 242-268 (VRHE…YRKD). Positions 211, 244, and 245 each coordinate Fe cation.

This sequence belongs to the deoxyhypusine hydroxylase family. Requires Fe(2+) as cofactor.

It carries out the reaction [eIF5A protein]-deoxyhypusine + AH2 + O2 = [eIF5A protein]-hypusine + A + H2O. It functions in the pathway protein modification; eIF5A hypusination. Functionally, catalyzes the hydroxylation of the N(6)-(4-aminobutyl)-L-lysine intermediate produced by deoxyhypusine synthase/DHPS on a critical lysine of the eukaryotic translation initiation factor 5A/eIF-5A. This is the second step of the post-translational modification of that lysine into an unusual amino acid residue named hypusine. Hypusination is unique to mature eIF-5A factor and is essential for its function. This Danio rerio (Zebrafish) protein is Deoxyhypusine hydroxylase (dohh).